The sequence spans 499 residues: MLHLFAGLDLHTGLLLLLALAFVLFYEAINGFHDTANAVATVIYTRAMRSQLAVVMAAVFNFLGVLLGGLSVAYAIVHMLPTDLLLNMGSSHGLAMVFSMLLAAIIWNLGTWYFGLPASSSHTLIGAIIGIGLTNALMTGTSVVDALNIPKVLSIFGSLIVSPIVGLVFAGGLIFLLRRYWSGTKKRARIHLTPAEREKKDGKKKPPFWTRIALILSAIGVAFSHGANDGQKGIGLVMLVLIGVAPAGFVVNMNATGYEITRTRDAINNVEAYFEQHPALLKQATGADQLVPAPEAGATQPAEFHCHPSNTINALNRLKGMLTTDVESYDKLSLDQRSQMRRIMLCVSDTIDKVVKMPGVSADDQRLLKKLKSDMLSTIEYAPVWIIMAVALALGIGTMIGWRRVATTIGEKIGKKGMTYAQGMSAQMTAAVSIGLASYTGMPVSTTHVLSSSVAGTMVVDGGGLQRKTVTSILMAWVFTLPAAVLLSGGLYWLSLQFL.

Topologically, residues 1–4 are periplasmic; it reads MLHL. Residues 5–25 form a helical membrane-spanning segment; it reads FAGLDLHTGLLLLLALAFVLF. Residues 26-51 are Cytoplasmic-facing; it reads YEAINGFHDTANAVATVIYTRAMRSQ. The chain crosses the membrane as a helical span at residues 52–72; the sequence is LAVVMAAVFNFLGVLLGGLSV. The Periplasmic segment spans residues 73–93; that stretch reads AYAIVHMLPTDLLLNMGSSHG. The helical transmembrane segment at 94–114 threads the bilayer; sequence LAMVFSMLLAAIIWNLGTWYF. At 115 to 123 the chain is on the cytoplasmic side; the sequence is GLPASSSHT. Residues 124 to 144 traverse the membrane as a helical segment; that stretch reads LIGAIIGIGLTNALMTGTSVV. Residues 145-154 lie on the Periplasmic side of the membrane; it reads DALNIPKVLS. A helical membrane pass occupies residues 155 to 175; sequence IFGSLIVSPIVGLVFAGGLIF. Topologically, residues 176–206 are cytoplasmic; it reads LLRRYWSGTKKRARIHLTPAEREKKDGKKKP. The helical transmembrane segment at 207-227 threads the bilayer; it reads PFWTRIALILSAIGVAFSHGA. Over 228–232 the chain is Periplasmic; it reads NDGQK. A helical transmembrane segment spans residues 233-253; it reads GIGLVMLVLIGVAPAGFVVNM. Topologically, residues 254–381 are cytoplasmic; that stretch reads NATGYEITRT…KSDMLSTIEY (128 aa). A helical membrane pass occupies residues 382 to 402; the sequence is APVWIIMAVALALGIGTMIGW. At 403–429 the chain is on the periplasmic side; sequence RRVATTIGEKIGKKGMTYAQGMSAQMT. The helical transmembrane segment at 430 to 450 threads the bilayer; sequence AAVSIGLASYTGMPVSTTHVL. Residues 451-472 are Cytoplasmic-facing; it reads SSSVAGTMVVDGGGLQRKTVTS. Residues 473 to 493 form a helical membrane-spanning segment; that stretch reads ILMAWVFTLPAAVLLSGGLYW. Residues 494–499 lie on the Periplasmic side of the membrane; it reads LSLQFL.

It belongs to the inorganic phosphate transporter (PiT) (TC 2.A.20) family. Pit subfamily.

Its subcellular location is the cell inner membrane. The catalysed reaction is phosphate(in) + H(+)(in) = phosphate(out) + H(+)(out). In terms of biological role, low-affinity inorganic phosphate transporter. The polypeptide is Low-affinity inorganic phosphate transporter PitA (pitA) (Escherichia coli O157:H7).